The chain runs to 116 residues: uncharacterized protein (116 aa).

The chain crosses the membrane as a helical span at residues 5–23 (LLAVETWYMLILSFRFLFF).

It localises to the membrane. This is an uncharacterized protein from Saccharomyces cerevisiae (strain ATCC 204508 / S288c) (Baker's yeast).